A 391-amino-acid polypeptide reads, in one-letter code: tRNA (cytosine(38)-C(5))-methyltransferase (391 aa).

In terms of domain architecture, SAM-dependent MTase C5-type spans L4–E391. S-adenosyl-L-methionine is bound by residues I13–G15, D34, I57–E58, and S76. C79 is a catalytic residue. An S-adenosyl-L-methionine-binding site is contributed by S376.

The protein belongs to the class I-like SAM-binding methyltransferase superfamily. C5-methyltransferase family.

Its subcellular location is the cytoplasm. It carries out the reaction cytidine(38) in tRNA + S-adenosyl-L-methionine = 5-methylcytidine(38) in tRNA + S-adenosyl-L-homocysteine + H(+). In terms of biological role, specifically methylates cytosine 38 in the anticodon loop of tRNA(Asp). Has higher activity on tRNA(Asp) modified with queuosine at position 34. The chain is tRNA (cytosine(38)-C(5))-methyltransferase (Trdmt1) from Rattus norvegicus (Rat).